The sequence spans 185 residues: Large ribosomal subunit protein uL16m (185 aa).

It belongs to the universal ribosomal protein uL16 family.

The protein localises to the mitochondrion. This chain is Large ribosomal subunit protein uL16m (RPL16), found in Zea mays (Maize).